The primary structure comprises 358 residues: Thiol protease aleurain-like (358 aa).

A signal peptide spans Met-1–Ser-21. Positions Lys-22–Thr-140 are cleaved as a propeptide — activation peptide. Asn-125 is a glycosylation site (N-linked (GlcNAc...) asparagine). Cystine bridges form between Cys-162-Cys-205 and Cys-196-Cys-238. Cys-165 is an active-site residue. Asn-254 is a glycosylation site (N-linked (GlcNAc...) asparagine). Cys-296 and Cys-346 are disulfide-bonded. Residues His-305 and Asn-325 contribute to the active site.

It belongs to the peptidase C1 family.

The protein resides in the vacuole. The catalysed reaction is Hydrolysis of proteins, acting as an aminopeptidase (notably, cleaving Arg-|-Xaa bonds) as well as an endopeptidase.. Functionally, may play a role in proteolysis leading to mobilization of nitrogen during senescence and starvation. The sequence is that of Thiol protease aleurain-like from Arabidopsis thaliana (Mouse-ear cress).